We begin with the raw amino-acid sequence, 263 residues long: Thiamine thiazole synthase (263 aa).

NAD(+) is bound by residues Ser-43, 62–63, Gly-70, Val-134, and 160–162; these read ER and HID. The Fe cation site is built by Asp-162 and His-177. NAD(+) contacts are provided by Ser-180 and Met-227. Residue Arg-237 coordinates glycine.

The protein belongs to the THI4 family. As to quaternary structure, homooctamer; tetramer of dimers. Fe(2+) is required as a cofactor.

It catalyses the reaction hydrogen sulfide + glycine + NAD(+) = ADP-5-ethyl-4-methylthiazole-2-carboxylate + nicotinamide + 3 H2O + H(+). It participates in cofactor biosynthesis; thiamine diphosphate biosynthesis. Its function is as follows. Involved in the biosynthesis of the thiazole moiety of thiamine. Catalyzes the conversion of NAD and glycine to adenosine diphosphate 5-(2-hydroxyethyl)-4-methylthiazole-2-carboxylate (ADT), an adenylated thiazole intermediate, using free sulfide as a source of sulfur. The chain is Thiamine thiazole synthase from Methanococcus aeolicus (strain ATCC BAA-1280 / DSM 17508 / OCM 812 / Nankai-3).